Reading from the N-terminus, the 450-residue chain is Tubulin alpha chain (450 aa).

Residue Gln11 participates in GTP binding. Lys40 is subject to N6-acetyllysine. GTP-binding residues include Glu71, Ser140, Gly144, Thr145, Thr179, Asn206, and Asn228. A Mg(2+)-binding site is contributed by Glu71. Glu254 is a catalytic residue.

Belongs to the tubulin family. In terms of assembly, dimer of alpha and beta chains. A typical microtubule is a hollow water-filled tube with an outer diameter of 25 nm and an inner diameter of 15 nM. Alpha-beta heterodimers associate head-to-tail to form protofilaments running lengthwise along the microtubule wall with the beta-tubulin subunit facing the microtubule plus end conferring a structural polarity. Microtubules usually have 13 protofilaments but different protofilament numbers can be found in some organisms and specialized cells. Requires Mg(2+) as cofactor. Acetylation of alpha chains at Lys-40 stabilizes microtubules and affects affinity and processivity of microtubule motors. This modification has a role in multiple cellular functions, ranging from cell motility, cell cycle progression or cell differentiation to intracellular trafficking and signaling.

The protein resides in the cytoplasm. It is found in the cytoskeleton. It catalyses the reaction GTP + H2O = GDP + phosphate + H(+). In terms of biological role, tubulin is the major constituent of microtubules, a cylinder consisting of laterally associated linear protofilaments composed of alpha- and beta-tubulin heterodimers. Microtubules grow by the addition of GTP-tubulin dimers to the microtubule end, where a stabilizing cap forms. Below the cap, tubulin dimers are in GDP-bound state, owing to GTPase activity of alpha-tubulin. In Oxytricha granulifera (Ciliate), this protein is Tubulin alpha chain.